The primary structure comprises 582 residues: Probable DNA ligase (582 aa).

Glu-243 lines the ATP pocket. Lys-245 serves as the catalytic N6-AMP-lysine intermediate. Positions 250, 265, 295, 335, 410, and 416 each coordinate ATP.

The protein belongs to the ATP-dependent DNA ligase family. Requires Mg(2+) as cofactor.

It carries out the reaction ATP + (deoxyribonucleotide)n-3'-hydroxyl + 5'-phospho-(deoxyribonucleotide)m = (deoxyribonucleotide)n+m + AMP + diphosphate.. In terms of biological role, DNA ligase that seals nicks in double-stranded DNA during DNA replication, DNA recombination and DNA repair. This chain is Probable DNA ligase, found in Dictyoglomus thermophilum (strain ATCC 35947 / DSM 3960 / H-6-12).